Here is a 447-residue protein sequence, read N- to C-terminus: Phosphoglucosamine mutase (447 aa).

The active-site Phosphoserine intermediate is the serine 100. Mg(2+)-binding residues include serine 100, aspartate 239, aspartate 241, and aspartate 243. Serine 100 is subject to Phosphoserine.

The protein belongs to the phosphohexose mutase family. Requires Mg(2+) as cofactor. In terms of processing, activated by phosphorylation.

It carries out the reaction alpha-D-glucosamine 1-phosphate = D-glucosamine 6-phosphate. Functionally, catalyzes the conversion of glucosamine-6-phosphate to glucosamine-1-phosphate. The protein is Phosphoglucosamine mutase of Halalkalibacterium halodurans (strain ATCC BAA-125 / DSM 18197 / FERM 7344 / JCM 9153 / C-125) (Bacillus halodurans).